The following is a 473-amino-acid chain: MGRTLYDKIWDEHVVHTEEDGTAILYIDRHLVHEVTSPQAFEGIRQAGRKVWRVSSIVATADHNTPTTGWERGYDGIEDPISKEQITTLDKNIAEVGAAAFFPFMSKRQGIVHVIGPENGATLPGMTVVCGDSHTSTHGAFGALAHGIGTSEVEHVMATQTLLAKKAKNMLIRVEGQVAPGVTAKDIVLAIIGKIGTAGGTGYTIEFAGPAIRALSMEGRMTVCNMAIEAGARAGLVAVDDKTIEYVKNRPLSPTGVEWDQAVAYWKTLHSDADAHFDTVVTLNGADIVPQVTWGTSPEMVLGVDASVPDPDKEKDPNKRSAIERALTYMALEPGKPLNDIFVDKVFIGSCTNSRIEDMREAAAVVKKLGRKVARNIKVAMVVPGSGLVKEQAEREGLDQVFKAAGFEWREPGCSMCLAMNADRLEPGERCASTSNRNFEGRQGAGGRTHLVSPAMAAAAAVHGHFVDIRKFA.

Residues Cys-351, Cys-414, and Cys-417 each coordinate [4Fe-4S] cluster.

It belongs to the aconitase/IPM isomerase family. LeuC type 1 subfamily. As to quaternary structure, heterodimer of LeuC and LeuD. [4Fe-4S] cluster serves as cofactor.

It carries out the reaction (2R,3S)-3-isopropylmalate = (2S)-2-isopropylmalate. It participates in amino-acid biosynthesis; L-leucine biosynthesis; L-leucine from 3-methyl-2-oxobutanoate: step 2/4. Functionally, catalyzes the isomerization between 2-isopropylmalate and 3-isopropylmalate, via the formation of 2-isopropylmaleate. The polypeptide is 3-isopropylmalate dehydratase large subunit (Paracidovorax citrulli (strain AAC00-1) (Acidovorax citrulli)).